Reading from the N-terminus, the 76-residue chain is Conotoxin Cal5a L2 (76 aa).

The signal sequence occupies residues 1–22 (MRFYIGLMAALMLTSILRTDSA). Residues 23–42 (SVGQTGTKSELALIERVIRQ) constitute a propeptide that is removed on maturation. At Pro-50 the chain carries 4-hydroxyproline. A 4-hydroxyproline; partial mark is found at Pro-58, Pro-62, and Pro-64.

The protein belongs to the conotoxin T superfamily. Post-translationally, contains 2 disulfide bonds that can be either 'C1-C3, C2-C4' or 'C1-C4, C2-C3', since these disulfide connectivities have been observed for conotoxins with cysteine framework V (for examples, see AC P0DQQ7 and AC P81755). In terms of tissue distribution, expressed by the venom duct.

The protein localises to the secreted. Probable neurotoxin with unknown target. Possibly targets ion channels. In Californiconus californicus (California cone), this protein is Conotoxin Cal5a L2.